Consider the following 389-residue polypeptide: Arginine biosynthesis bifunctional protein ArgJ (389 aa).

Residues T150, K173, T184, E263, N384, and T389 each contribute to the substrate site. T184 (nucleophile) is an active-site residue.

This sequence belongs to the ArgJ family. Heterotetramer of two alpha and two beta chains.

It localises to the cytoplasm. The catalysed reaction is N(2)-acetyl-L-ornithine + L-glutamate = N-acetyl-L-glutamate + L-ornithine. It carries out the reaction L-glutamate + acetyl-CoA = N-acetyl-L-glutamate + CoA + H(+). The protein operates within amino-acid biosynthesis; L-arginine biosynthesis; L-ornithine and N-acetyl-L-glutamate from L-glutamate and N(2)-acetyl-L-ornithine (cyclic): step 1/1. Its pathway is amino-acid biosynthesis; L-arginine biosynthesis; N(2)-acetyl-L-ornithine from L-glutamate: step 1/4. Functionally, catalyzes two activities which are involved in the cyclic version of arginine biosynthesis: the synthesis of N-acetylglutamate from glutamate and acetyl-CoA as the acetyl donor, and of ornithine by transacetylation between N(2)-acetylornithine and glutamate. The polypeptide is Arginine biosynthesis bifunctional protein ArgJ (Deinococcus radiodurans (strain ATCC 13939 / DSM 20539 / JCM 16871 / CCUG 27074 / LMG 4051 / NBRC 15346 / NCIMB 9279 / VKM B-1422 / R1)).